We begin with the raw amino-acid sequence, 351 residues long: Cytosolic sulfotransferase 9 (351 aa).

Residues 1–11 are compositionally biased toward basic and acidic residues; the sequence is MDEKDILRNLR. Positions 1 to 24 are disordered; the sequence is MDEKDILRNLREEEEEEEENQSEE. Positions 12 to 22 are enriched in acidic residues; sequence EEEEEEEENQS. 80-85 serves as a coordination point for 3'-phosphoadenylyl sulfate; sequence KSGTTW. The active-site Proton acceptor is histidine 152. Residues arginine 174, serine 182, tyrosine 252, and 317–319 each bind 3'-phosphoadenylyl sulfate; that span reads RKG.

The protein belongs to the sulfotransferase 1 family. As to expression, expressed in roots and leaves.

It localises to the cytoplasm. Sulfotransferase that utilizes 3'-phospho-5'-adenylyl sulfate (PAPS) as sulfonate donor. No activity with brassinosteroids. This is Cytosolic sulfotransferase 9 (STO9) from Arabidopsis thaliana (Mouse-ear cress).